The chain runs to 388 residues: Aldolase vrtJ (388 aa).

Residue Lys241 is modified to N6-(pyridoxal phosphate)lysine.

This sequence belongs to the threonine aldolase family. The cofactor is pyridoxal 5'-phosphate.

The protein operates within secondary metabolite biosynthesis; terpenoid biosynthesis. In terms of biological role, aldolase; part of the gene cluster that mediates the biosynthesis of viridicatumtoxin, a tetracycline-like fungal meroterpenoid with a unique, fused spirobicyclic ring system. The first step of the pathway is the production of the malonamoyl-CoA starter unit for the polyketide synthase vrtA. The aldolase vrtJ may be involved in the synthesis of the malonamate substrate for malonamoyl-CoA synthetase vrtB. The polyketide synthase vrtA then may utilize the malonamoyl-CoA starter unit, followed by sequential condensation of eight malonyl-CoA units to form the polyketide backbone. The cyclization of the last ring could be mediated by the lactamase-like protein vrtG. The proposed post-PKS tailoring steps are a hydroxylation at C5 catalyzed the cytochrome P450 monooxygenase vrtE, a hydroxylation at C12a catalyzed by VrtH and/or VrtI, and an O-methylation by the O-methyltransferase vrtF. VrtC is then proposed to catalyze the transfer of a geranyl group synthesized by vrtD to the aromatic C ring of the tetracyclic polyketide intermediate of viridicatumtoxin to yield previridicatumtoxin. Finally, the cytochrome P450 monooxygenase vrtK catalyzes the spirocyclization of the geranyl moiety of previridicatumtoxin to afford viridicatumtoxin. This is Aldolase vrtJ from Penicillium aethiopicum.